Here is a 746-residue protein sequence, read N- to C-terminus: PAN2-PAN3 deadenylation complex subunit pan3 (746 aa).

The C3H1-type zinc-finger motif lies at 7–35 (PKNQKQCKNIALHGYCRNSDKCEFSHELT). Low complexity predominate over residues 64–97 (QQQQQQQNSNGNGSNNTATSNNPIISPNSNIASP). Disordered regions lie at residues 64–100 (QQQQ…PLKK), 169–205 (DDQH…NMNN), and 219–275 (NASP…PSLQ). Residues 196–205 (NNGIDPNMNN) are compositionally biased toward polar residues. Low complexity predominate over residues 221–275 (SPQSYQQQFQQPNPSPQSSSQQQQQQQQQQQQAVYQQQQQQQPSSQPLAQNPSLQ). The segment at 351–610 (DPNDPRIKNI…NIDEVVLMIS (260 aa)) is pseudokinase domain. ATP is bound by residues Arg407, 457 to 464 (EFFPGSET), and 509 to 510 (SK). Residues 611 to 649 (GRLLQENNYLHTYTDDLETELSKEYENGRLFRLVTKLGF) are a coiled coil. The tract at residues 650 to 746 (INERPLYDMD…SELVSQKSHI (97 aa)) is knob domain.

The protein belongs to the protein kinase superfamily. PAN3 family. In terms of assembly, homodimer. Forms a heterotrimer with a catalytic subunit PAN2 to form the poly(A)-nuclease (PAN) deadenylation complex. Interacts (via PAM-2 motif) with poly(A)-binding protein (via PABC domain), conferring substrate specificity of the enzyme complex.

Its subcellular location is the cytoplasm. Its function is as follows. Regulatory subunit of the poly(A)-nuclease (PAN) deadenylation complex, one of two cytoplasmic mRNA deadenylases involved in mRNA turnover. PAN specifically shortens poly(A) tails of RNA and the activity is stimulated by poly(A)-binding protein (PABP). PAN deadenylation is followed by rapid degradation of the shortened mRNA tails by the CCR4-NOT complex. Deadenylated mRNAs are then degraded by two alternative mechanisms, namely exosome-mediated 3'-5' exonucleolytic degradation, or deadenylation-dependent mRNA decaping and subsequent 5'-3' exonucleolytic degradation by XRN1. PAN3 acts as a positive regulator for PAN activity, recruiting the catalytic subunit PAN2 to mRNA via its interaction with RNA and PABP. The sequence is that of PAN2-PAN3 deadenylation complex subunit pan3 from Dictyostelium discoideum (Social amoeba).